Reading from the N-terminus, the 335-residue chain is MGRLILEHTLQGHKGRIWGVAWHPKGNVFASCGEDKAIRIWSLTGNTWSTKTILSDGHKRTIREIRWSPCGQYLASASFDATTAIWSKSSGEFECNATLEGHENEVKSVSWSRSGGLLATCSRDKSVWIWEVAGDDEFECAAVLNPHTQDVKRVVWHPTKDILASASYDNTIKMFAEEPIDNDWDCTATLTSHTSTVWGIDFDADGERLVSCSDDTTIKIWRAYHPGNTAGVATPDQQTVWKCVCTVSGQHSRAIYDVSWCKLTGLIATACGDDGIRIFKESSDSKPDEPTFEQITAEEGAHDQDVNSVQWNPVVAGQLISCSDDGTIKIWKVTE.

WD repeat units follow at residues 12 to 51 (GHKGRIWGVAWHPKGNVFASCGEDKAIRIWSLTGNTWSTK), 57 to 96 (GHKRTIREIRWSPCGQYLASASFDATTAIWSKSSGEFECN), 101 to 140 (GHENEVKSVSWSRSGGLLATCSRDKSVWIWEVAGDDEFEC), 146 to 185 (PHTQDVKRVVWHPTKDILASASYDNTIKMFAEEPIDNDWD), 192 to 231 (SHTSTVWGIDFDADGERLVSCSDDTTIKIWRAYHPGNTAG), 250 to 289 (QHSRAIYDVSWCKLTGLIATACGDDGIRIFKESSDSKPDE), and 301 to 335 (AHDQDVNSVQWNPVVAGQLISCSDDGTIKIWKVTE).

The protein belongs to the WD repeat CIA1 family. Conjugated to URM1, a ubiquitin-like protein.

Essential component of the cytosolic iron-sulfur (Fe/S) protein assembly machinery. Required for the maturation of extramitochondrial Fe/S proteins. The polypeptide is Probable cytosolic iron-sulfur protein assembly protein Ciao1 (Drosophila melanogaster (Fruit fly)).